Consider the following 205-residue polypeptide: Proteasome subunit beta type-3 (205 aa).

Position 2 is an N-acetylserine (serine 2). Lysine 77 is subject to N6-acetyllysine.

Belongs to the peptidase T1B family. The 26S proteasome consists of a 20S proteasome core and two 19S regulatory subunits. The 20S proteasome core is a barrel-shaped complex made of 28 subunits that are arranged in four stacked rings. The two outer rings are each formed by seven alpha subunits, and the two inner rings are formed by seven beta subunits. The proteolytic activity is exerted by three beta-subunits PSMB5, PSMB6 and PSMB7. As to quaternary structure, (Microbial infection) Interacts with HIV-1 TAT protein.

Its subcellular location is the cytoplasm. The protein localises to the nucleus. In terms of biological role, non-catalytic component of the 20S core proteasome complex involved in the proteolytic degradation of most intracellular proteins. This complex plays numerous essential roles within the cell by associating with different regulatory particles. Associated with two 19S regulatory particles, forms the 26S proteasome and thus participates in the ATP-dependent degradation of ubiquitinated proteins. The 26S proteasome plays a key role in the maintenance of protein homeostasis by removing misfolded or damaged proteins that could impair cellular functions, and by removing proteins whose functions are no longer required. Associated with the PA200 or PA28, the 20S proteasome mediates ubiquitin-independent protein degradation. This type of proteolysis is required in several pathways including spermatogenesis (20S-PA200 complex) or generation of a subset of MHC class I-presented antigenic peptides (20S-PA28 complex). The chain is Proteasome subunit beta type-3 from Homo sapiens (Human).